We begin with the raw amino-acid sequence, 150 residues long: Large ribosomal subunit protein bL9 (150 aa).

Belongs to the bacterial ribosomal protein bL9 family.

In terms of biological role, binds to the 23S rRNA. This chain is Large ribosomal subunit protein bL9, found in Desulforudis audaxviator (strain MP104C).